We begin with the raw amino-acid sequence, 523 residues long: Spastin (523 aa).

Residues 1 to 41 (MLDKLSKHKTMFYERVKEIDQILFSQQQAKQTQLDNLSNNN) lie on the Cytoplasmic side of the membrane. The helical intramembrane region spans 42-58 (ASGGFFSGFMKMFSPLS). Composition is skewed to low complexity over residues 57-71 (LSTP…NSNT), 171-184 (QQPP…QQQP), and 193-210 (TALR…TANN). 2 disordered regions span residues 57–77 (LSTP…AISQ) and 129–218 (GISS…LDQI). Topologically, residues 59 to 523 (TPPNSSSNNN…ESYGTFAKGI (465 aa)) are cytoplasmic.

Belongs to the AAA ATPase family. Spastin subfamily. Homohexamer. The homohexamer is stabilized by ATP-binding. The homohexamer may adopt a ring conformation through which microtubules pass prior to being severed.

It is found in the membrane. The enzyme catalyses n ATP + n H2O + a microtubule = n ADP + n phosphate + (n+1) alpha/beta tubulin heterodimers.. Functionally, ATP-dependent microtubule severing protein. Stimulates microtubule minus-end depolymerization and poleward microtubule flux in the mitotic spindle. In Naegleria gruberi (Amoeba), this protein is Spastin.